A 716-amino-acid chain; its full sequence is Zinc finger CCCH domain-containing protein 30 (716 aa).

2 ANK repeats span residues 90–120 (DYRT…DVNR) and 125–157 (DQTT…DLNL). A disordered region spans residues 201 to 231 (VTNVPNRSSSPCHSPTGENGGSGSGSPLGSP). Residues 203–213 (NVPNRSSSPCH) are compositionally biased toward polar residues. C3H1-type zinc fingers lie at residues 306–328 (PCPD…HGVF) and 336–360 (QYRT…HTPE). Positions 521 to 562 (FQQQQQQQQSMLSPINTSFSSPKSVDHSLFSGGGRMSPRNVV) are disordered. The segment covering 530-543 (SMLSPINTSFSSPK) has biased composition (polar residues). Ser566 carries the phosphoserine modification. The segment covering 583–594 (QQQQQQQQQQHQ) has biased composition (low complexity). Disordered regions lie at residues 583-638 (QQQQ…MSSE) and 667-692 (PAEA…PVEP). A compositionally biased stretch (polar residues) spans 605 to 630 (TNSSPIVGSPVNNNTWSSKWGSSNGQ).

This chain is Zinc finger CCCH domain-containing protein 30, found in Arabidopsis thaliana (Mouse-ear cress).